The primary structure comprises 62 residues: Large ribosomal subunit protein uL30 (62 aa).

This sequence belongs to the universal ribosomal protein uL30 family. In terms of assembly, part of the 50S ribosomal subunit.

This is Large ribosomal subunit protein uL30 from Marinobacter nauticus (strain ATCC 700491 / DSM 11845 / VT8) (Marinobacter aquaeolei).